The following is a 239-amino-acid chain: Pyridoxine 5'-phosphate synthase (239 aa).

Position 7 (asparagine 7) interacts with 3-amino-2-oxopropyl phosphate. Position 9–10 (9–10 (DH)) interacts with 1-deoxy-D-xylulose 5-phosphate. Position 18 (arginine 18) interacts with 3-amino-2-oxopropyl phosphate. Histidine 43 acts as the Proton acceptor in catalysis. 1-deoxy-D-xylulose 5-phosphate-binding residues include arginine 45 and histidine 50. Residue glutamate 70 is the Proton acceptor of the active site. Residue threonine 100 coordinates 1-deoxy-D-xylulose 5-phosphate. Histidine 191 serves as the catalytic Proton donor. 3-amino-2-oxopropyl phosphate contacts are provided by residues glycine 192 and 213–214 (GH).

The protein belongs to the PNP synthase family. In terms of assembly, homooctamer; tetramer of dimers.

Its subcellular location is the cytoplasm. It catalyses the reaction 3-amino-2-oxopropyl phosphate + 1-deoxy-D-xylulose 5-phosphate = pyridoxine 5'-phosphate + phosphate + 2 H2O + H(+). It functions in the pathway cofactor biosynthesis; pyridoxine 5'-phosphate biosynthesis; pyridoxine 5'-phosphate from D-erythrose 4-phosphate: step 5/5. In terms of biological role, catalyzes the complicated ring closure reaction between the two acyclic compounds 1-deoxy-D-xylulose-5-phosphate (DXP) and 3-amino-2-oxopropyl phosphate (1-amino-acetone-3-phosphate or AAP) to form pyridoxine 5'-phosphate (PNP) and inorganic phosphate. This chain is Pyridoxine 5'-phosphate synthase, found in Syntrophotalea carbinolica (strain DSM 2380 / NBRC 103641 / GraBd1) (Pelobacter carbinolicus).